Consider the following 216-residue polypeptide: Heart- and neural crest derivatives-expressed protein 2 (216 aa).

The disordered stretch occupies residues 74–115 (MDHSHYGGVPPGSGPPGLGGPRPVKRRGTANRKERRRTQSIN). Gly residues predominate over residues 82 to 93 (VPPGSGPPGLGG). A compositionally biased stretch (basic residues) spans 96–111 (PVKRRGTANRKERRRT). Positions 98-150 (KRRGTANRKERRRTQSINSAFAELRECIPNVPADTKLSKIKTLRLATSYIAYL) constitute a bHLH domain.

Efficient DNA binding requires dimerization with another bHLH protein.

Its subcellular location is the nucleus. In terms of biological role, essential for cardiac morphogenesis. Binds DNA on E-box consensus sequence 5'-CANNTG-3'. Plays an important role in limb development, particularly in the establishment of anterior-posterior polarization of the limb bud. The polypeptide is Heart- and neural crest derivatives-expressed protein 2 (HAND2) (Gallus gallus (Chicken)).